A 576-amino-acid polypeptide reads, in one-letter code: M-phase inducer phosphatase 2 (576 aa).

Residue Ser-42 is modified to Phosphoserine. Residues 90-105 are compositionally biased toward low complexity; it reads RRTSECSLSSESSESS. The segment at 90–119 is disordered; that stretch reads RRTSECSLSSESSESSDAGLCMDSPSPVDP. A Phosphoserine; by MELK modification is found at Ser-167. At Ser-248 the chain carries Phosphoserine. Ser-321 carries the phosphoserine; by MELK and MAPK14 modification. The segment at 338 to 358 is disordered; sequence QDRDVPVQSKRRKSVTPLEEQ. Residue Ser-351 is modified to Phosphoserine; by AURKA. Residue Ser-372 is modified to Phosphoserine; by BRSK1 and MAPK14. Positions 427 to 534 constitute a Rhodanese domain; it reads IVEKFVIVDC…FFPQHPNFCE (108 aa). Cys-483 is an active-site residue. Ser-559 carries the phosphoserine modification.

The protein belongs to the MPI phosphatase family. Interacts with MAPK14 and 14-3-3 proteins. Phosphorylated by BRSK1 in vitro. Phosphorylated by CHEK1, which inhibits the activity of this protein. Phosphorylation at Ser-351 by AURKA might locally participate in the control of the onset of mitosis. Phosphorylation by MELK at Ser-167 promotes localization to the centrosome and the spindle poles during mitosis. Phosphorylation at Ser-321 and Ser-372 by MAPK14 is required for binding to 14-3-3 proteins. As to expression, expressed predominantly in spleen, lung, heart, brain, intestine, and muscle.

It is found in the cytoplasm. Its subcellular location is the cytoskeleton. The protein resides in the microtubule organizing center. It localises to the centrosome. The protein localises to the spindle pole. It catalyses the reaction O-phospho-L-tyrosyl-[protein] + H2O = L-tyrosyl-[protein] + phosphate. With respect to regulation, stimulated by B-type cyclins. Functionally, tyrosine protein phosphatase which functions as a dosage-dependent inducer of mitotic progression. Directly dephosphorylates CDK1 and stimulates its kinase activity. Required for G2/M phases of the cell cycle progression and abscission during cytokinesis in a ECT2-dependent manner. The three isoforms seem to have a different level of activity. This Mus musculus (Mouse) protein is M-phase inducer phosphatase 2 (Cdc25b).